An 816-amino-acid polypeptide reads, in one-letter code: Sodium/hydrogen exchanger 1 (816 aa).

The Extracellular segment spans residues 1–98 (MLLWSAVRGL…FPVLGIDYTH (98 aa)). Residues 37 to 50 (LQLSPTDSTTPDSQ) are compositionally biased toward polar residues. A disordered region spans residues 37–79 (LQLSPTDSTTPDSQPSRERSIGDVTTAPPEVTPESRPVNRSVT). N-linked (GlcNAc...) asparagine glycosylation is present at asparagine 75. The chain crosses the membrane as a helical span at residues 99–121 (VRTPFEISLWILLACLMKIGFHV). Residues 122–130 (IPTISSIVP) lie on the Cytoplasmic side of the membrane. A helical transmembrane segment spans residues 131-148 (ESCLLIVVGLLVGGLIKG). Topologically, residues 149–158 (VGEKPPFLQS) are extracellular. Residues 159 to 176 (EVFFLFLLPPIILDAGYF) traverse the membrane as a helical segment. At 177–186 (LPLRQFTENL) the chain is on the cytoplasmic side. A helical membrane pass occupies residues 187 to 215 (GTILIFAVVGTLWNAFFLGGLMYAVCLVG). The Extracellular segment spans residues 216–222 (GEQINNI). The chain crosses the membrane as a helical span at residues 223–249 (GLLDNLLFGSIISAVDPVAVLAVFEEI). Residues 250 to 252 (HIN) lie on the Cytoplasmic side of the membrane. Residues 253-283 (ELLHILVFGESLLNDAVTVVLYHLFEEFANY) traverse the membrane as a helical segment. The Extracellular portion of the chain corresponds to 284 to 287 (DHVG). The helical transmembrane segment at 288–322 (IVDIVLGFLSFFVVALGGVFVGVVYGVIAAFTSRF) threads the bilayer. The Cytoplasmic portion of the chain corresponds to 323 to 328 (TAHIRV). A helical transmembrane segment spans residues 329–341 (IEPLFVFLYSYMA). Residues 342–350 (YLSAELFHL) are Extracellular-facing. The helical transmembrane segment at 351-371 (SGIMALIASGVVMRPYVEANI) threads the bilayer. At 372-373 (SH) the chain is on the cytoplasmic side. The helical transmembrane segment at 374-404 (KSHTTIKYFLKMWSSVSETLIFIFLGVSTVA) threads the bilayer. Over 405–410 (GSHHWN) the chain is Extracellular. The helical transmembrane segment at 411–438 (WTFVISTLLFCLIARVLGVLGLTWFINK) threads the bilayer. The Cytoplasmic portion of the chain corresponds to 439-444 (FRIVKL). The chain crosses the membrane as a helical span at residues 445 to 469 (TPKDQFIIAYGGLRGAIAFSLGYLL). The Extracellular segment spans residues 470–475 (DKKHFP). Residues 476–505 (MCDLFLTAIITVIFFTVFVQGMTIRPLVDL) traverse the membrane as a helical segment. Residues 503 to 545 (VDLLAVKKKQETKRSINEEIHTQFLDHLLTGIEDICGHYGHHH) are interaction with TESC. The Cytoplasmic portion of the chain corresponds to 506-816 (LAVKKKQETK…EGEPFIPKGQ (311 aa)). Residues 509–516 (KKKQETKR) are PI(4,5)P2-binding region. Residues 515 to 545 (KRSINEEIHTQFLDHLLTGIEDICGHYGHHH) form an interaction with CHP2 region. Residues 540 to 545 (HYGHHH) are confers pH-dependent PI(4,5)P2 binding. The segment at 552 to 560 (RFNKKYVKK) is PI(4,5)P2-binding region. Phosphoserine is present on residues serine 599 and serine 602. Phosphothreonine is present on threonine 603. A phosphoserine mark is found at serine 605 and serine 648. The interval 633–816 (KILRNNLQKT…EGEPFIPKGQ (184 aa)) is interaction with TESC. The interaction with CALM1 stretch occupies residues 633–816 (KILRNNLQKT…EGEPFIPKGQ (184 aa)). An interaction with PPP3CA region spans residues 684-687 (LTVP). Phosphoserine is present on residues serine 693, serine 697, and serine 703. The interaction with PPP3CA stretch occupies residues 715 to 720 (PVITID). Phosphoserine occurs at positions 723, 726, 729, 786, 788, and 797. The interval 748–816 (PRVAEEAAEE…EGEPFIPKGQ (69 aa)) is disordered. Positions 783–792 (PSDSPSSQRM) are enriched in polar residues.

This sequence belongs to the monovalent cation:proton antiporter 1 (CPA1) transporter (TC 2.A.36) family. As to quaternary structure, homodimer; dimerization is crucial for its function. Oligomer. Interacts with CALM in a calcium-dependent manner. Interacts with TESC. Interacts (via the juxtamembrane region of the cytoplasmic C-terminal domain) with CHP1; the interaction occurs at the plasma membrane in a calcium-dependent manner. Interacts with CHP2; the interaction occurs in a calcium-dependent manner. Interacts with EZR; regulates the cytoskeletal interactions of SLC9A1 and promotes stress fiber formation. Post-translationally, ubiquitinated, leading to its degradation by the proteasome. Ubiquitination is reduced by CHP1. In terms of processing, O-glycosylated. Palmitoylated; may play a major role in SLC9A1 regulation. Post-translationally, phosphorylation at Ser-648 by AKT1 reduces SLC9A1 binding to CALM1. As to expression, kidney and intestine.

It localises to the cell membrane. Its subcellular location is the basolateral cell membrane. It carries out the reaction Na(+)(in) + H(+)(out) = Na(+)(out) + H(+)(in). It catalyses the reaction Li(+)(out) + H(+)(in) = Li(+)(in) + H(+)(out). The enzyme catalyses Li(+)(in) + Na(+)(out) = Li(+)(out) + Na(+)(in). With respect to regulation, activated at acidic pHs. Inhibited by cariporide and eniporide. Phosphatidylinositol 4,5-bisphosphate (PI(4,5)P2) and phosphatidylinositol 3,4,5-trisphosphate (PI(3,4,5)P3) bind and differentially regulate SLC9A1 activity. In terms of biological role, electroneutral Na(+) /H(+) antiporter that extrudes Na(+) in exchange for external protons driven by the inward sodium ion chemical gradient, protecting cells from acidification that occurs from metabolism. Exchanges intracellular H(+) ions for extracellular Na(+) in 1:1 stoichiometry. Plays a key role in maintening intracellular pH neutral and cell volume, and thus is important for cell growth, proliferation, migration and survival. In addition, can transport lithium Li(+) and functions also as a Na(+)/Li(+) antiporter. SLC9A1 also functions in membrane anchoring and organization of scaffolding complexes that coordinate signaling inputs. This is Sodium/hydrogen exchanger 1 (SLC9A1) from Oryctolagus cuniculus (Rabbit).